Consider the following 203-residue polypeptide: Ribosomal RNA large subunit methyltransferase E (203 aa).

Glycine 59, tryptophan 61, aspartate 79, aspartate 97, and aspartate 119 together coordinate S-adenosyl-L-methionine. Lysine 159 (proton acceptor) is an active-site residue.

It belongs to the class I-like SAM-binding methyltransferase superfamily. RNA methyltransferase RlmE family.

It is found in the cytoplasm. The enzyme catalyses uridine(2552) in 23S rRNA + S-adenosyl-L-methionine = 2'-O-methyluridine(2552) in 23S rRNA + S-adenosyl-L-homocysteine + H(+). Its function is as follows. Specifically methylates the uridine in position 2552 of 23S rRNA at the 2'-O position of the ribose in the fully assembled 50S ribosomal subunit. The protein is Ribosomal RNA large subunit methyltransferase E of Desulforapulum autotrophicum (strain ATCC 43914 / DSM 3382 / VKM B-1955 / HRM2) (Desulfobacterium autotrophicum).